The chain runs to 172 residues: Large ribosomal subunit protein uL10 (172 aa).

It belongs to the universal ribosomal protein uL10 family. Part of the ribosomal stalk of the 50S ribosomal subunit. The N-terminus interacts with L11 and the large rRNA to form the base of the stalk. The C-terminus forms an elongated spine to which L12 dimers bind in a sequential fashion forming a multimeric L10(L12)X complex.

Its function is as follows. Forms part of the ribosomal stalk, playing a central role in the interaction of the ribosome with GTP-bound translation factors. This Methylorubrum populi (strain ATCC BAA-705 / NCIMB 13946 / BJ001) (Methylobacterium populi) protein is Large ribosomal subunit protein uL10.